A 1232-amino-acid polypeptide reads, in one-letter code: Anion exchange protein 3 (1232 aa).

Over residues 1 to 11 the composition is skewed to pro residues; sequence MANGVIPPPGG. 2 disordered regions span residues 1-316 and 429-499; these read MANG…KLDR and NDDK…DSHR. Topologically, residues 1 to 708 are cytoplasmic; it reads MANGVIPPPG…DLRDALHSQC (708 aa). The span at 58–75 shows a compositional bias: basic and acidic residues; it reads DPEKPSRSYSERDFEFHR. 2 stretches are compositionally biased toward basic residues: residues 76–97 and 104–113; these read HTSH…KLRR and RHTRRKRKKE. Over residues 134-152 the composition is skewed to acidic residues; it reads VDEEEEEEEEEEGESEAEP. 4 positions are modified to phosphoserine: S167, S170, S175, and S198. Basic and acidic residues predominate over residues 267–279; it reads DDMKSHRLEDNPG. A compositionally biased stretch (basic residues) spans 280–289; sequence VRRHLVKKPS. Position 295 is an omega-N-methylarginine (R295). The span at 305 to 316 shows a compositional bias: basic residues; it reads LRRKKKKKKLDR. Positions 440–450 are enriched in polar residues; sequence NPSSSSMNSVL. The span at 481–499 shows a compositional bias: basic and acidic residues; sequence HDPDAKEKPLHMPGGDSHR. The next 5 membrane-spanning stretches (helical) occupy residues 709–731, 737–774, 794–816, 826–847, and 893–910; these read VAAV…GLLG, LMGV…LLVF, VWVG…SFLV, IFAF…YKVF, and ALLS…AFFL. Residues 709–1232 form a membrane (anion exchange) region; sequence VAAVLFIYFA…DEYNELHMPV (524 aa). The Cytoplasmic portion of the chain corresponds to 911–925; it reads RKFRNSRFLGGKARR. 5 helical membrane-spanning segments follow: residues 926 to 946, 980 to 1002, 1028 to 1049, 1083 to 1128, and 1155 to 1191; these read IIGD…DYSI, PFPP…LIFM, LLLI…LTAA, VTGV…IQLS, and MHLF…TVPL. The S-palmitoyl cysteine moiety is linked to residue C1165.

Belongs to the anion exchanger (TC 2.A.31) family.

The protein localises to the cell membrane. The enzyme catalyses hydrogencarbonate(in) + chloride(out) = hydrogencarbonate(out) + chloride(in). Sodium-independent anion exchanger which mediates the electroneutral exchange of chloride for bicarbonate ions across the cell membrane. May be involved in the regulation of intracellular pH, and the modulation of cardiac action potential. The sequence is that of Anion exchange protein 3 (SLC4A3) from Plecturocebus moloch (Dusky titi monkey).